Reading from the N-terminus, the 275-residue chain is NH(3)-dependent NAD(+) synthetase (275 aa).

Gly-46–Ser-53 provides a ligand contact to ATP. Residue Asp-52 coordinates Mg(2+). Arg-140 contributes to the deamido-NAD(+) binding site. Thr-160 is an ATP binding site. A Mg(2+)-binding site is contributed by Glu-165. Deamido-NAD(+)-binding residues include Lys-173 and Asp-180. Residues Lys-189 and Thr-211 each contribute to the ATP site. Residue His-260–Lys-261 participates in deamido-NAD(+) binding.

This sequence belongs to the NAD synthetase family. Homodimer.

It carries out the reaction deamido-NAD(+) + NH4(+) + ATP = AMP + diphosphate + NAD(+) + H(+). It functions in the pathway cofactor biosynthesis; NAD(+) biosynthesis; NAD(+) from deamido-NAD(+) (ammonia route): step 1/1. Its function is as follows. Catalyzes the ATP-dependent amidation of deamido-NAD to form NAD. Uses ammonia as a nitrogen source. The polypeptide is NH(3)-dependent NAD(+) synthetase (Salmonella paratyphi A (strain ATCC 9150 / SARB42)).